Reading from the N-terminus, the 84-residue chain is Beta-defensin 119 (84 aa).

The signal sequence occupies residues 1 to 21 (MKFLFLFLAILLATEVPVISG). Cystine bridges form between Cys28/Cys55, Cys35/Cys49, and Cys39/Cys56.

This sequence belongs to the beta-defensin family. Abundant expression in the male reproductive tract only. Expressed abundantly in testis, while expression in epididymis decreased gradually from caput to cauda.

The protein localises to the secreted. Its function is as follows. Has antibacterial activity. In Macaca mulatta (Rhesus macaque), this protein is Beta-defensin 119 (DEFB119).